Reading from the N-terminus, the 1241-residue chain is Dinoflagellate luciferase (1241 aa).

Luciferase regions lie at residues 114–465 (KTGL…IKRD), 491–842 (DQGF…TKRD), and 868–1218 (EKGF…KKRD).

This sequence belongs to the calycin superfamily. Luciferase family.

The protein localises to the cytoplasmic vesicle. The catalysed reaction is dinoflagellate luciferin + O2 = oxidized dinoflagellate luciferin + hnu + H2O + H(+). Regulated by pH: upon acidification, at a pH of 6.3, dinoflagellate luciferin is released from luciferin-binding protein LBP, allowing the interaction between Dinoflagellate luciferase and its substrate luciferin. In terms of biological role, emits blue light flashes with a wavelength of 475 nm during the night phase. The sequence is that of Dinoflagellate luciferase from Lingulodinium polyedra (Dinoflagellate).